A 62-amino-acid chain; its full sequence is Ferredoxin-1 (62 aa).

4Fe-4S ferredoxin-type domains lie at 2–28 and 29–62; these read ALYI…SAGS and EIYV…IVQG. The [4Fe-4S] cluster site is built by Cys9, Cys12, Cys15, Cys19, Cys38, Cys41, Cys50, and Cys54.

Requires [4Fe-4S] cluster as cofactor.

In terms of biological role, ferredoxins are iron-sulfur proteins that transfer electrons in a wide variety of metabolic reactions. This Chlorobaculum tepidum (strain ATCC 49652 / DSM 12025 / NBRC 103806 / TLS) (Chlorobium tepidum) protein is Ferredoxin-1.